Reading from the N-terminus, the 1687-residue chain is Zinc finger protein 142 (1687 aa).

Disordered stretches follow at residues 1–23 (MTDP…LCPE) and 83–150 (TLTP…RLEG). The segment covering 125–140 (KEEKSDTQKDSQKAVD) has biased composition (basic and acidic residues). S154 is subject to Phosphoserine. 3 C2H2-type zinc fingers span residues 163–185 (HMCP…LHLH), 219–242 (HHCP…ASMH), and 253–275 (YACP…LKSH). The C2H2-type 4; atypical zinc finger occupies 286-311 (LRCFQEGCSYAAPDRKAFIKHLKETH). C2H2-type zinc fingers lie at residues 316–340 (VECR…HKSH), 343–366 (FHCP…KQGH), 372–395 (LRCT…GKMH), 401–423 (HQCP…MLLH), 429–451 (HKCE…MLTH), 457–479 (YMCT…MRKH), 485–507 (YQCN…KLRH), 512–536 (LMCE…SQHH), 544–567 (YPCH…NCKH), and 573–596 (FHCA…RKAH). Residue K594 forms a Glycyl lysine isopeptide (Lys-Gly) (interchain with G-Cter in SUMO2) linkage. Disordered stretches follow at residues 613-690 (EPEG…EVEE), 704-798 (LESV…PPLP), 897-935 (KGLP…EAEL), 947-1014 (REPE…SPTE), and 1052-1092 (GRGG…GDGD). Residues 725–739 (PLGLEGPDGLEGPEL) are compositionally biased toward low complexity. Residues 1061 to 1075 (TPQTQPDVSPLSNGD) show a composition bias toward polar residues. Low complexity predominate over residues 1082–1092 (GSTESSSGDGD). C2H2-type zinc fingers lie at residues 1135-1158 (LHCS…KRRH), 1171-1194 (LQCG…RLKH), 1200-1222 (HQCP…QSRH), 1228-1251 (IPCS…LRVH), 1257-1280 (HFCP…NSCH), 1286-1309 (FACS…LRRH), 1328-1351 (LHCS…RKQH), 1354-1377 (LECG…RQQH), 1380-1403 (HRCQ…LEQH), 1424-1446 (LHCP…VKGH), 1452-1474 (YKCT…SRIH), 1480-1502 (YHCH…MRIH), 1508-1530 (YLCP…MTKH), 1536-1559 (YQCP…ETRH), and 1565-1587 (FMCE…LRKH). K1193 participates in a covalent cross-link: Glycyl lysine isopeptide (Lys-Gly) (interchain with G-Cter in SUMO2). K1242 is covalently cross-linked (Glycyl lysine isopeptide (Lys-Gly) (interchain with G-Cter in SUMO2)). A Glycyl lysine isopeptide (Lys-Gly) (interchain with G-Cter in SUMO2) cross-link involves residue K1591. 2 consecutive C2H2-type zinc fingers follow at residues 1593–1615 (YVCN…ALTH) and 1621–1643 (FFCR…VRRH). Residues 1638-1687 (KHVRRHHPDQADPNQGVGKDPTTPTVHLHDVQLEDPSPPAPAAPHTGPEG) are disordered.

Belongs to the krueppel C2H2-type zinc-finger protein family.

Its subcellular location is the nucleus. In terms of biological role, may be involved in transcriptional regulation. The protein is Zinc finger protein 142 of Homo sapiens (Human).